Reading from the N-terminus, the 416-residue chain is Pectin acetylesterase 3 (416 aa).

An N-terminal signal peptide occupies residues 1-25 (MKSVLRIAAAIFWLWLFIVLGVIGS). N-linked (GlcNAc...) asparagine glycosylation occurs at N131. Catalysis depends on charge relay system residues S198 and D294. N-linked (GlcNAc...) asparagine glycosylation occurs at N324. H361 acts as the Charge relay system in catalysis.

It belongs to the pectinacetylesterase family.

It localises to the secreted. Its subcellular location is the cell wall. Functionally, hydrolyzes acetyl esters in homogalacturonan regions of pectin. In type I primary cell wall, galacturonic acid residues of pectin can be acetylated at the O-2 and O-3 positions. Decreasing the degree of acetylation of pectin gels in vitro alters their physical properties. This is Pectin acetylesterase 3 from Arabidopsis thaliana (Mouse-ear cress).